The primary structure comprises 162 residues: Cyanate hydratase (162 aa).

Catalysis depends on residues Arg103, Glu106, and Ser129.

This sequence belongs to the cyanase family.

It catalyses the reaction cyanate + hydrogencarbonate + 3 H(+) = NH4(+) + 2 CO2. Its function is as follows. Catalyzes the reaction of cyanate with bicarbonate to produce ammonia and carbon dioxide. This Pyrenophora tritici-repentis (strain Pt-1C-BFP) (Wheat tan spot fungus) protein is Cyanate hydratase.